A 121-amino-acid chain; its full sequence is Small ribosomal subunit protein bS6 (121 aa).

This sequence belongs to the bacterial ribosomal protein bS6 family.

Binds together with bS18 to 16S ribosomal RNA. This is Small ribosomal subunit protein bS6 from Rickettsia canadensis (strain McKiel).